A 363-amino-acid polypeptide reads, in one-letter code: Heat-inducible transcription repressor HrcA (363 aa).

It belongs to the HrcA family.

Negative regulator of class I heat shock genes (grpE-dnaK-dnaJ and groELS operons). Prevents heat-shock induction of these operons. This chain is Heat-inducible transcription repressor HrcA, found in Rhizobium radiobacter (Agrobacterium tumefaciens).